A 185-amino-acid chain; its full sequence is UPF0669 protein C6orf120 homolog (185 aa).

A signal peptide spans 1-23 (MAARWRRILIVFVAAQVLCLVNT). Asparagine 47 carries N-linked (GlcNAc...) asparagine glycosylation.

This sequence belongs to the UPF0669 family.

It localises to the secreted. This is UPF0669 protein C6orf120 homolog from Gallus gallus (Chicken).